The chain runs to 336 residues: IgLON family member 5 (336 aa).

The N-terminal stretch at 1 to 30 (MPPPAPGARLRLLAAAALAGLAVISRGLLS) is a signal peptide. 3 consecutive Ig-like C2-type domains span residues 33–122 (LEFN…QPYT), 132–217 (PARI…VNYP), and 218–307 (PTIT…MRLL). Residues N41, N49, N67, and N137 are each glycosylated (N-linked (GlcNAc...) asparagine). A disulfide bridge links C54 with C112. 2 disulfides stabilise this stretch: C154–C195 and C238–C291. N288 carries N-linked (GlcNAc...) asparagine glycosylation.

Belongs to the immunoglobulin superfamily. IgLON family.

Its subcellular location is the secreted. In Homo sapiens (Human), this protein is IgLON family member 5 (IGLON5).